Here is a 298-residue protein sequence, read N- to C-terminus: S-adenosyl-L-methionine-dependent methyltransferase dpfgK (298 aa).

The protein belongs to the methyltransferase superfamily.

It functions in the pathway secondary metabolite biosynthesis; terpenoid biosynthesis. Its function is as follows. S-adenosyl-L-methionine-dependent methyltransferase; part of the gene cluster that mediates the biosynthesis of diterpenoid pyrones. The first step of the pathway is the synthesis of the alpha-pyrone moiety by the polyketide synthase dpfgA via condensation of one acetyl-CoA starter unit with 3 malonyl-CoA units and 2 methylations. The alpha-pyrone is then combined with geranylgeranyl pyrophosphate (GGPP) formed by the GGPP synthase dpfgD through the action of the prenyltransferase dpfgC to yield a linear alpha-pyrone diterpenoid. Subsequent steps in the diterpenoid pyrone biosynthetic pathway involve the decalin core formation, which is initiated by the epoxidation of the C10-C11 olefin by the FAD-dependent oxidoreductase dpfgE, and is followed by a cyclization cascade catalyzed by the terpene cyclase dpfgB. The short chain dehydrogenase/reductase dpfgG then oxidizes the 8S hydroxy group to a ketone and the short chain dehydrogenase/reductase dpfgH reduces the ketone to the 8R hydroxy group to yield higginsianin B. Higginsianin B is further methylated by the methyltransferase dpfgI to produce the intermediate named FDDP B. The cytochrome P450 monooxygenase dfgpJ then catalyzes a three-step oxidation at C-27 to generate a carboxylic acid as well as C-26 hydroxylation. Finally, methyltransferase dpfgK methylates the carboxylic acid generated by dpfgJ, yielding the final diterpenoid pyrones from the pathway which were named FDDP D and FDDP E. In Gibberella zeae (strain ATCC MYA-4620 / CBS 123657 / FGSC 9075 / NRRL 31084 / PH-1) (Wheat head blight fungus), this protein is S-adenosyl-L-methionine-dependent methyltransferase dpfgK.